We begin with the raw amino-acid sequence, 367 residues long: Pectate lyase 1 (367 aa).

Residues 1 to 21 form the signal peptide; that stretch reads MASPCLIAVLVFLCAIVSCYS. Cysteine 28 and cysteine 45 are joined by a disulfide. The interval 38-305 is beta-helix; the sequence is NRMKLADCAV…YKKEVTKRIG (268 aa). Residues 92-104 form an igE-binding. Binds to IgE in 5 out of 7 patients tested region; sequence IFSQNMNIKLKMP. A disulfide bridge links cysteine 128 with cysteine 147. A glycan (N-linked (GlcNAc...) asparagine) is linked at asparagine 148. A Ca(2+)-binding site is contributed by aspartate 170. N-linked (GlcNAc...) asparagine glycosylation occurs at asparagine 178. Ca(2+) contacts are provided by aspartate 194 and aspartate 198. The igE-binding. Binds to IgE in 6 out of 7 patients tested stretch occupies residues 239 to 250; sequence AFNQFGPNAGQR. Arginine 250 is an active-site residue. The tract at residues 251–258 is igE-binding. Binds to IgE in 5 out of 7 patients tested; that stretch reads MPRARYGL. Residues cysteine 306 and cysteine 312 are joined by a disulfide bond. The igE-binding. Binds to IgE in 3 out of 7 patients tested stretch occupies residues 317 to 327; sequence WRSTRDAFING.

The protein belongs to the polysaccharide lyase 1 family. Amb a subfamily. Requires Ca(2+) as cofactor. In terms of processing, N-glycosylated; consists of complex-type N-glycans containing the Lewis a antigen (Galbeta1-3(Fucalpha1-4)GlcNAcbeta1-). As to expression, expressed in pollen (at protein level).

It catalyses the reaction Eliminative cleavage of (1-&gt;4)-alpha-D-galacturonan to give oligosaccharides with 4-deoxy-alpha-D-galact-4-enuronosyl groups at their non-reducing ends.. It participates in glycan metabolism; pectin degradation; 2-dehydro-3-deoxy-D-gluconate from pectin: step 2/5. Its function is as follows. Has low pectate lyase activity. This is Pectate lyase 1 from Juniperus ashei (Ozark white cedar).